The primary structure comprises 346 residues: D-erythrose-4-phosphate dehydrogenase (346 aa).

Position 11-12 (11-12) interacts with NAD(+); sequence RI. Residues 163 to 165, Arg-209, 222 to 223, and Arg-245 contribute to the substrate site; these read SCT and TK. The active-site Nucleophile is the Cys-164. Asn-327 lines the NAD(+) pocket.

It belongs to the glyceraldehyde-3-phosphate dehydrogenase family. Epd subfamily. In terms of assembly, homotetramer.

Its subcellular location is the cytoplasm. The catalysed reaction is D-erythrose 4-phosphate + NAD(+) + H2O = 4-phospho-D-erythronate + NADH + 2 H(+). The protein operates within cofactor biosynthesis; pyridoxine 5'-phosphate biosynthesis; pyridoxine 5'-phosphate from D-erythrose 4-phosphate: step 1/5. Functionally, catalyzes the NAD-dependent conversion of D-erythrose 4-phosphate to 4-phosphoerythronate. The polypeptide is D-erythrose-4-phosphate dehydrogenase (Vibrio vulnificus (strain CMCP6)).